A 476-amino-acid polypeptide reads, in one-letter code: Ribulose bisphosphate carboxylase large chain (476 aa).

The propeptide occupies 1 to 2 (MS). Proline 3 carries the post-translational modification N-acetylproline. N6,N6,N6-trimethyllysine is present on lysine 14. Substrate is bound by residues asparagine 123 and threonine 173. The active-site Proton acceptor is the lysine 175. Lysine 177 is a binding site for substrate. Positions 201, 203, and 204 each coordinate Mg(2+). N6-carboxylysine is present on lysine 201. Residue histidine 294 is the Proton acceptor of the active site. 3 residues coordinate substrate: arginine 295, histidine 327, and serine 379.

This sequence belongs to the RuBisCO large chain family. Type I subfamily. In terms of assembly, heterohexadecamer of 8 large chains and 8 small chains; disulfide-linked. The disulfide link is formed within the large subunit homodimers. The cofactor is Mg(2+). Post-translationally, the disulfide bond which can form in the large chain dimeric partners within the hexadecamer appears to be associated with oxidative stress and protein turnover.

The protein resides in the plastid. It is found in the chloroplast. It carries out the reaction 2 (2R)-3-phosphoglycerate + 2 H(+) = D-ribulose 1,5-bisphosphate + CO2 + H2O. The enzyme catalyses D-ribulose 1,5-bisphosphate + O2 = 2-phosphoglycolate + (2R)-3-phosphoglycerate + 2 H(+). Functionally, ruBisCO catalyzes two reactions: the carboxylation of D-ribulose 1,5-bisphosphate, the primary event in carbon dioxide fixation, as well as the oxidative fragmentation of the pentose substrate in the photorespiration process. Both reactions occur simultaneously and in competition at the same active site. The chain is Ribulose bisphosphate carboxylase large chain from Brachypodium distachyon (Purple false brome).